The sequence spans 325 residues: Putative ankyrin repeat protein RF_0011 (325 aa).

3 ANK repeats span residues 63-94 (NGNTTLILAADAGLEEACLKLIPKMSDEAINM), 99-130 (RGQPALVKAMWRDLDSVCIELIPKMSKENINA), and 134-164 (CGRTLLMLAAKKGMTTVSKMFINLMPPEMII).

This chain is Putative ankyrin repeat protein RF_0011, found in Rickettsia felis (strain ATCC VR-1525 / URRWXCal2) (Rickettsia azadi).